A 545-amino-acid polypeptide reads, in one-letter code: CTP synthase (545 aa).

The segment at 1 to 266 (MATNYIFVTG…DDFVCERFRL (266 aa)) is amidoligase domain. Ser-14 serves as a coordination point for CTP. A UTP-binding site is contributed by Ser-14. Residues 15 to 20 (SLGKGI) and Asp-72 each bind ATP. The Mg(2+) site is built by Asp-72 and Glu-140. CTP contacts are provided by residues 147–149 (DIE), 187–192 (KTKPTQ), and Lys-223. UTP is bound by residues 187 to 192 (KTKPTQ) and Lys-223. 239 to 241 (KDV) lines the ATP pocket. The Glutamine amidotransferase type-1 domain maps to 291-542 (TIGMVGKYTE…VKAAYENHKK (252 aa)). Gly-352 is an L-glutamine binding site. The active-site Nucleophile; for glutamine hydrolysis is Cys-379. L-glutamine-binding positions include 380 to 383 (LGMQ), Glu-403, and Arg-470. Residues His-515 and Glu-517 contribute to the active site.

Belongs to the CTP synthase family. Homotetramer.

It carries out the reaction UTP + L-glutamine + ATP + H2O = CTP + L-glutamate + ADP + phosphate + 2 H(+). It catalyses the reaction L-glutamine + H2O = L-glutamate + NH4(+). The enzyme catalyses UTP + NH4(+) + ATP = CTP + ADP + phosphate + 2 H(+). It participates in pyrimidine metabolism; CTP biosynthesis via de novo pathway; CTP from UDP: step 2/2. Its activity is regulated as follows. Allosterically activated by GTP, when glutamine is the substrate; GTP has no effect on the reaction when ammonia is the substrate. The allosteric effector GTP functions by stabilizing the protein conformation that binds the tetrahedral intermediate(s) formed during glutamine hydrolysis. Inhibited by the product CTP, via allosteric rather than competitive inhibition. Functionally, catalyzes the ATP-dependent amination of UTP to CTP with either L-glutamine or ammonia as the source of nitrogen. Regulates intracellular CTP levels through interactions with the four ribonucleotide triphosphates. This chain is CTP synthase, found in Haemophilus influenzae (strain ATCC 51907 / DSM 11121 / KW20 / Rd).